Here is a 424-residue protein sequence, read N- to C-terminus: ATP-sensitive inward rectifier potassium channel 8 (424 aa).

At 1–69 the chain is on the cytoplasmic side; it reads MLARKSIIPE…IFTTLVDLKW (69 aa). The residue at position 6 (S6) is a Phosphoserine. A helical transmembrane segment spans residues 70-94; that stretch reads RHTLVIFTMSFLCSWLLFAIMWWLV. Topologically, residues 95-126 are extracellular; it reads AFAHGDIYAYMEKGTMEKSGLESAVCVTNVRS. Positions 127-138 form an intramembrane region, helical; Pore-forming; sequence FTSAFLFSIEVQ. The segment at residues 139–145 is an intramembrane region (pore-forming); the sequence is VTIGFGG. The Selectivity filter signature appears at 140–145; that stretch reads TIGFGG. Residues 146–154 are Extracellular-facing; that stretch reads RMMTEECPL. A helical transmembrane segment spans residues 155–176; sequence AITVLILQNIVGLIINAVMLGC. Topologically, residues 177 to 424 are cytoplasmic; sequence IFMKTAQAHR…PEGNQCPSES (248 aa). Residues 373–409 are disordered; the sequence is ELSHQNSLRKRNSMRRNNSMRRNNSIRRNNSSLMVPK. A compositionally biased stretch (low complexity) spans 387 to 404; sequence RRNNSMRRNNSIRRNNSS.

It belongs to the inward rectifier-type potassium channel (TC 1.A.2.1) family. KCNJ8 subfamily. As to quaternary structure, interacts with ABCC9.

It localises to the membrane. The catalysed reaction is K(+)(in) = K(+)(out). In terms of biological role, inward rectifier potassium channels are characterized by a greater tendency to allow potassium to flow into the cell rather than out of it. Their voltage dependence is regulated by the concentration of extracellular potassium; as external potassium is raised, the voltage range of the channel opening shifts to more positive voltages. The inward rectification is mainly due to the blockage of outward current by internal magnesium. This channel is activated by internal ATP and can be blocked by external barium. Can form a sulfonylurea-sensitive but ATP-insensitive potassium channel with ABCC9. The sequence is that of ATP-sensitive inward rectifier potassium channel 8 (Kcnj8) from Mus musculus (Mouse).